A 435-amino-acid chain; its full sequence is Adenylosuccinate synthetase (435 aa).

Residues 13-19 (GDEGKGK) and 41-43 (GHT) each bind GTP. Asp-14 functions as the Proton acceptor in the catalytic mechanism. Residues Asp-14 and Gly-41 each contribute to the Mg(2+) site. IMP-binding positions include 14 to 17 (DEGK), 39 to 42 (NAGH), Thr-130, Arg-144, Gln-225, Thr-240, and Arg-304. The active-site Proton donor is His-42. 300–306 (ATTGRPR) is a binding site for substrate. GTP contacts are provided by residues Arg-306, 332-334 (KLD), and 419-421 (STG).

The protein belongs to the adenylosuccinate synthetase family. Homodimer. Requires Mg(2+) as cofactor.

It is found in the cytoplasm. It carries out the reaction IMP + L-aspartate + GTP = N(6)-(1,2-dicarboxyethyl)-AMP + GDP + phosphate + 2 H(+). It functions in the pathway purine metabolism; AMP biosynthesis via de novo pathway; AMP from IMP: step 1/2. Functionally, plays an important role in the de novo pathway of purine nucleotide biosynthesis. Catalyzes the first committed step in the biosynthesis of AMP from IMP. The chain is Adenylosuccinate synthetase from Nitrosospira multiformis (strain ATCC 25196 / NCIMB 11849 / C 71).